Here is a 456-residue protein sequence, read N- to C-terminus: GPI-anchored protein 13 (456 aa).

An N-terminal signal peptide occupies residues 1 to 23 (MRSPSLAVAATTVLGLFSSSALA). A glycan (N-linked (GlcNAc...) asparagine) is linked at Asn27. Residue Gly433 is the site of GPI-anchor amidated glycine attachment. Residues 434-456 (AAAVNVVPTTAFGLFAIILASIF) constitute a propeptide, removed in mature form.

Post-translationally, the GPI-anchor is attached to the protein in the endoplasmic reticulum and serves to target the protein to the cell surface. There, the glucosamine-inositol phospholipid moiety is cleaved off and the GPI-modified mannoprotein is covalently attached via its lipidless GPI glycan remnant to the 1,6-beta-glucan of the outer cell wall layer.

It is found in the secreted. It localises to the cell wall. The protein resides in the membrane. Its function is as follows. Cell wall protein which contributes to cell wall synthesis and is important for acquiring normal surface properties. Required for virulence in a mouse infection model. The protein is GPI-anchored protein 13 (PGA13) of Candida albicans (strain SC5314 / ATCC MYA-2876) (Yeast).